Reading from the N-terminus, the 271-residue chain is Tropinone reductase homolog At2g29360 (271 aa).

NADP(+) is bound at residue L22–H46. Residue S155 participates in substrate binding. Y168 acts as the Proton acceptor in catalysis.

This sequence belongs to the short-chain dehydrogenases/reductases (SDR) family. SDR65C subfamily.

Functionally, oxidoreductase active on cyclic ketones, but not on tropinone or nortropinone. The sequence is that of Tropinone reductase homolog At2g29360 from Arabidopsis thaliana (Mouse-ear cress).